We begin with the raw amino-acid sequence, 205 residues long: Probable anaerobic dimethyl sulfoxide reductase chain YnfG (205 aa).

4Fe-4S ferredoxin-type domains lie at Tyr5–Glu33, Phe59–Asp89, and Gly90–Glu119. Positions 14, 17, 20, 24, 67, 70, 75, 79, 99, 102, 105, 109, 126, 129, 141, and 145 each coordinate [4Fe-4S] cluster. The tract at residues Ile183–Val205 is disordered. Positions Asn186–Thr195 are enriched in polar residues.

As to quaternary structure, the complex consists of three subunits: YnfF, the reductase; YnfG, an electron transfer protein, and YnfH, a membrane anchor protein. Requires [4Fe-4S] cluster as cofactor.

In terms of biological role, electron transfer subunit of the terminal reductase during anaerobic growth on various sulfoxide and N-oxide compounds. The polypeptide is Probable anaerobic dimethyl sulfoxide reductase chain YnfG (ynfG) (Escherichia coli O6:H1 (strain CFT073 / ATCC 700928 / UPEC)).